The following is a 339-amino-acid chain: 4-hydroxy-2-oxovalerate aldolase 3 (339 aa).

Residues 7–259 (IRVTDTSLRD…KTGIDFFAIA (253 aa)) form the Pyruvate carboxyltransferase domain. 15–16 (RD) lines the substrate pocket. Asp-16 contacts Mn(2+). Residue His-19 is the Proton acceptor of the active site. Substrate is bound by residues Ser-169 and His-198. Mn(2+)-binding residues include His-198 and His-200. Tyr-289 contacts substrate.

This sequence belongs to the 4-hydroxy-2-oxovalerate aldolase family.

The catalysed reaction is (S)-4-hydroxy-2-oxopentanoate = acetaldehyde + pyruvate. This chain is 4-hydroxy-2-oxovalerate aldolase 3 (hsaF), found in Rhodococcus jostii (strain RHA1).